A 340-amino-acid polypeptide reads, in one-letter code: Glycerol-3-phosphate dehydrogenase [NAD(P)+] (340 aa).

Residues serine 11, tryptophan 12, arginine 33, and lysine 106 each contribute to the NADPH site. The sn-glycerol 3-phosphate site is built by lysine 106, glycine 137, and serine 139. Alanine 141 contacts NADPH. The sn-glycerol 3-phosphate site is built by lysine 192, aspartate 245, serine 255, arginine 256, and asparagine 257. Residue lysine 192 is the Proton acceptor of the active site. Position 256 (arginine 256) interacts with NADPH. The NADPH site is built by valine 280 and glutamate 282.

Belongs to the NAD-dependent glycerol-3-phosphate dehydrogenase family.

The protein localises to the cytoplasm. The catalysed reaction is sn-glycerol 3-phosphate + NAD(+) = dihydroxyacetone phosphate + NADH + H(+). The enzyme catalyses sn-glycerol 3-phosphate + NADP(+) = dihydroxyacetone phosphate + NADPH + H(+). It participates in membrane lipid metabolism; glycerophospholipid metabolism. Catalyzes the reduction of the glycolytic intermediate dihydroxyacetone phosphate (DHAP) to sn-glycerol 3-phosphate (G3P), the key precursor for phospholipid synthesis. This chain is Glycerol-3-phosphate dehydrogenase [NAD(P)+], found in Bacillus mycoides (strain KBAB4) (Bacillus weihenstephanensis).